The chain runs to 112 residues: UPF0342 protein STH1710 (112 aa).

It belongs to the UPF0342 family.

This chain is UPF0342 protein STH1710, found in Symbiobacterium thermophilum (strain DSM 24528 / JCM 14929 / IAM 14863 / T).